The sequence spans 404 residues: Pyrophosphate--fructose 6-phosphate 1-phosphotransferase (404 aa).

Diphosphate is bound at residue Gly-12. Residue Asp-121 coordinates Mg(2+). Substrate contacts are provided by residues 149–151 (TID), 194–196 (MGR), Glu-266, and 323–326 (YFSR). Asp-151 (proton acceptor) is an active-site residue.

This sequence belongs to the phosphofructokinase type A (PFKA) family. PPi-dependent PFK group II subfamily. Clade 'P' sub-subfamily. Homodimer. It depends on Mg(2+) as a cofactor.

The protein localises to the cytoplasm. The enzyme catalyses beta-D-fructose 6-phosphate + diphosphate = beta-D-fructose 1,6-bisphosphate + phosphate + H(+). It functions in the pathway carbohydrate degradation; glycolysis; D-glyceraldehyde 3-phosphate and glycerone phosphate from D-glucose: step 3/4. With respect to regulation, non-allosteric. Catalyzes the phosphorylation of D-fructose 6-phosphate, the first committing step of glycolysis. Uses inorganic phosphate (PPi) as phosphoryl donor instead of ATP like common ATP-dependent phosphofructokinases (ATP-PFKs), which renders the reaction reversible, and can thus function both in glycolysis and gluconeogenesis. Consistently, PPi-PFK can replace the enzymes of both the forward (ATP-PFK) and reverse (fructose-bisphosphatase (FBPase)) reactions. The sequence is that of Pyrophosphate--fructose 6-phosphate 1-phosphotransferase from Propionibacterium freudenreichii subsp. shermanii (strain ATCC 9614 / DSM 4902 / CIP 103027 / NCIMB 8099 / CIRM-BIA1).